The chain runs to 457 residues: Siroheme synthase (457 aa).

The interval 1–204 is precorrin-2 dehydrogenase /sirohydrochlorin ferrochelatase; that stretch reads MDHLPIFCQL…NDQKAITETT (204 aa). NAD(+)-binding positions include 22–23 and 43–44; these read DV and LA. A Phosphoserine modification is found at serine 128. Residues 216–457 form a uroporphyrinogen-III C-methyltransferase region; that stretch reads GEVVLVGAGP…RDKLNWFSNH (242 aa). S-adenosyl-L-methionine is bound at residue proline 225. Aspartate 248 functions as the Proton acceptor in the catalytic mechanism. Catalysis depends on lysine 270, which acts as the Proton donor. S-adenosyl-L-methionine contacts are provided by residues 301 to 303, isoleucine 306, 331 to 332, methionine 382, and glycine 411; these read GGD and TA.

It in the N-terminal section; belongs to the precorrin-2 dehydrogenase / sirohydrochlorin ferrochelatase family. The protein in the C-terminal section; belongs to the precorrin methyltransferase family.

It catalyses the reaction uroporphyrinogen III + 2 S-adenosyl-L-methionine = precorrin-2 + 2 S-adenosyl-L-homocysteine + H(+). The enzyme catalyses precorrin-2 + NAD(+) = sirohydrochlorin + NADH + 2 H(+). The catalysed reaction is siroheme + 2 H(+) = sirohydrochlorin + Fe(2+). It participates in cofactor biosynthesis; adenosylcobalamin biosynthesis; precorrin-2 from uroporphyrinogen III: step 1/1. It functions in the pathway cofactor biosynthesis; adenosylcobalamin biosynthesis; sirohydrochlorin from precorrin-2: step 1/1. Its pathway is porphyrin-containing compound metabolism; siroheme biosynthesis; precorrin-2 from uroporphyrinogen III: step 1/1. The protein operates within porphyrin-containing compound metabolism; siroheme biosynthesis; siroheme from sirohydrochlorin: step 1/1. It participates in porphyrin-containing compound metabolism; siroheme biosynthesis; sirohydrochlorin from precorrin-2: step 1/1. In terms of biological role, multifunctional enzyme that catalyzes the SAM-dependent methylations of uroporphyrinogen III at position C-2 and C-7 to form precorrin-2 via precorrin-1. Then it catalyzes the NAD-dependent ring dehydrogenation of precorrin-2 to yield sirohydrochlorin. Finally, it catalyzes the ferrochelation of sirohydrochlorin to yield siroheme. The chain is Siroheme synthase from Shigella dysenteriae serotype 1 (strain Sd197).